Reading from the N-terminus, the 31-residue chain is Phospholipase A2 homolog P-elapitoxin-Aa1a beta chain (31 aa).

Belongs to the phospholipase A2 family. Group I subfamily. Heterotrimer of alpha, beta and gamma chains, each related to PLA2. In terms of tissue distribution, expressed by the venom gland.

It is found in the secreted. Its function is as follows. Heterotrimer: Snake venom phospholipase A2 (PLA2) that has presynaptic neurotoxicity. Inhibits nerve-evoked twitch contractions but not responses to cholinergic agonists acetylcholine and carbachol and to depolarizing agonist KCl. Causes a fade in tetanic contractions. Displays a triphasic mode of action with depression, enhancement and blockade of neurotransmission. Does not display myotoxic activity such as changes in baseline muscle tension or inhibition of directly stimulated muscle twitches. All subunits are necessary for maximum toxicity. Functionally, monomer: The beta chain has no enzymatic activity and is not toxic by itself. This is Phospholipase A2 homolog P-elapitoxin-Aa1a beta chain from Acanthophis antarcticus (Common death adder).